The following is a 289-amino-acid chain: Transcriptional regulator Rob (289 aa).

The HTH araC/xylS-type domain maps to 8-106 (RDLLIWLEGH…SQTPALYRRS (99 aa)). DNA-binding regions (H-T-H motif) lie at residues 25–46 (DNVA…KDVT) and 73–96 (ILDI…KKQF).

Functionally, transcriptional regulator. Represses transcription of genes belonging to the flagellar regulon, including flhD, flhB and fliC; probably thereby leading to repression of motility. Binds to regulatory regions of target genes, including the promoters of the flhDC operon and of P-type ATPase mgtA. Involved in post-transcriptional regulation of expression. Represses expression of the flhDC operon in a post-transcriptional manner. Binds to the right arm of the replication origin oriC of the chromosome. Rob binding may influence the formation of the nucleoprotein structure, required for oriC function in the initiation of replication. The polypeptide is Transcriptional regulator Rob (Salmonella typhimurium (strain LT2 / SGSC1412 / ATCC 700720)).